Here is a 90-residue protein sequence, read N- to C-terminus: MKAWKVEPYEISKAMELIYKYLLLDKKDFSLEEFYKLTIYAIKWKLEQAQFPLYLESTKKSHQNVIPQPFKIKGNVLYKTVIKNSGDFEE.

This is an uncharacterized protein from Bacillus subtilis (strain 168).